A 929-amino-acid chain; its full sequence is Synaptopodin (929 aa).

Methionine 1 carries the N-acetylmethionine modification. Over residues 1–12 (MLGPHLPPPPLA) the composition is skewed to pro residues. Residues 1-260 (MLGPHLPPPP…EASLLRHLEK (260 aa)) form a disordered region. Basic and acidic residues-rich tracts occupy residues 60 to 69 (GVSRSGDDSA) and 91 to 110 (SREEQGASQHDDRASQDWDV). Phosphoserine is present on serine 140. Over residues 142 to 151 (TEKDLKEAKA) the composition is skewed to basic and acidic residues. A compositionally biased stretch (polar residues) spans 152-170 (RSQQIAAQLTTPPSSNSRG). The residue at position 207 (serine 207) is a Phosphoserine. The segment covering 224–234 (EPGPPRHPSPQ) has biased composition (pro residues). Serine 263 bears the Phosphoserine mark. The tract at residues 285-389 (GLHLSQNREA…TLCADGQPQA (105 aa)) is disordered. The segment covering 317–332 (LASPSATLTTPTSNSS) has biased composition (low complexity). Asparagine 330 carries an N-linked (GlcNAc...) asparagine glycan. Polar residues predominate over residues 333 to 379 (HNPPATDVNQNPPATVVPQSLPLSSIQQNSSEAQLPSNGTGPASKPS). Residues serine 501 and serine 525 each carry the phosphoserine modification. Residues 509–558 (FGEKAPAPQPPSLPDRSPRPQRHIMSRSPMVERRMMGQRSPASERRPLGN) form a disordered region. Threonine 560 is modified (phosphothreonine). A PPxY motif motif is present at residues 562–565 (PPTY). Serine 580 is modified (phosphoserine). Residues 581 to 584 (PPSY) carry the PPxY motif motif. 2 disordered regions span residues 589 to 610 (PSSDPKSSHLKGQAVPASKTGI) and 630 to 726 (KPKV…KGAE). The segment covering 646 to 656 (ADEKRRQRDQG) has biased composition (basic and acidic residues). 3 positions are modified to phosphoserine: serine 685, serine 702, and tyrosine 738. Residues 685-698 (SPAAAEEVVPEWAS) are compositionally biased toward low complexity. Residues 740–763 (IESSSHTPELARCPSPTMSLPSSW) are disordered. The residue at position 746 (threonine 746) is a Phosphothreonine. Phosphoserine occurs at positions 754, 758, and 779. Residue threonine 783 is modified to Phosphothreonine. Phosphoserine occurs at positions 784, 804, 812, 826, 833, 854, 871, and 894. The span at 826-839 (KVSPRAASPAKPSS) shows a compositional bias: low complexity. The segment at 826-916 (KVSPRAASPA…RPSFSTRNAG (91 aa)) is disordered. Positions 866-880 (GLYTSPGQDSLQPTA) are enriched in polar residues.

This sequence belongs to the synaptopodin family. Interacts with BAIAP1. Interacts with actin. Interacts (via PPxY motifs) with WWC1 (via WW domains). O-glycosylated. In terms of tissue distribution, expressed in cerebral cortex.

The protein localises to the cytoplasm. It localises to the cytoskeleton. Its subcellular location is the cell junction. The protein resides in the tight junction. It is found in the perikaryon. The protein localises to the cell projection. It localises to the dendritic spine. Its subcellular location is the postsynaptic density. The protein resides in the synapse. It is found in the cytosol. Its function is as follows. Actin-associated protein that may play a role in modulating actin-based shape and motility of dendritic spines and renal podocyte foot processes. Seems to be essential for the formation of spine apparatuses in spines of telencephalic neurons, which is involved in synaptic plasticity. The chain is Synaptopodin (SYNPO) from Homo sapiens (Human).